The chain runs to 295 residues: Replication-associated protein A (295 aa).

Residues 12–114 (RLQTKYVFLT…DGNVITKGEF (103 aa)) form the CRESS-DNA virus Rep endonuclease domain. The short motif at 19–22 (FLTY) is the RCR-1 element. Positions 53, 61, and 63 each coordinate a divalent metal cation. An RCR-2 motif is present at residues 61–63 (HLH). The active-site For DNA cleavage activity is the Tyr101. The short motif at 101 to 104 (YISK) is the RCR-3 element. Asp105 contacts a divalent metal cation. An oligomerization region spans residues 163–175 (SANKLFPPQPEIY). The LXCXE motif, interaction with host RBR1 signature appears at 184 to 188 (LQCHE). The interval 232–295 (EGLEPGSPPS…PSNSSHSGSN (64 aa)) is disordered. Over residues 267–295 (PSTSLSMMTTRPTTSSTTSPSNSSHSGSN) the composition is skewed to low complexity.

Belongs to the geminiviridae Rep protein family. Homooligomer. Interacts (via LXCXE domain) with host retinoblastoma-related protein 1 (RBR1), and may thereby deregulate the host cell cycle. Part of the C- and V-complexes which are RepA-Rep-DNA complexes involved in the c-sense and v-sense transcription. The cofactor is Mg(2+). It depends on Mn(2+) as a cofactor.

The protein resides in the host nucleus. Its subcellular location is the host cytoplasm. Its function is as follows. Implicated in enhancement of V-sense gene expression. Acts a an inhibitor of C-sense gene transcription. The polypeptide is Replication-associated protein A (Datura stramonium (Jimsonweed)).